Reading from the N-terminus, the 157-residue chain is Aspartate carbamoyltransferase regulatory chain (157 aa).

Zn(2+) contacts are provided by Cys-108, Cys-113, Cys-138, and Cys-141.

It belongs to the PyrI family. In terms of assembly, contains catalytic and regulatory chains. Requires Zn(2+) as cofactor.

In terms of biological role, involved in allosteric regulation of aspartate carbamoyltransferase. This Korarchaeum cryptofilum (strain OPF8) protein is Aspartate carbamoyltransferase regulatory chain.